The chain runs to 92 residues: Small ribosomal subunit protein uS19 (92 aa).

Positions 73-92 (EFSPTRSFRGHAGAKNKGKK) are disordered. Over residues 80 to 92 (FRGHAGAKNKGKK) the composition is skewed to basic residues.

Belongs to the universal ribosomal protein uS19 family.

Protein S19 forms a complex with S13 that binds strongly to the 16S ribosomal RNA. In Flavobacterium psychrophilum (strain ATCC 49511 / DSM 21280 / CIP 103535 / JIP02/86), this protein is Small ribosomal subunit protein uS19.